A 309-amino-acid chain; its full sequence is Protein FdhE (309 aa).

Belongs to the FdhE family.

It localises to the cytoplasm. Necessary for formate dehydrogenase activity. This Shigella boydii serotype 18 (strain CDC 3083-94 / BS512) protein is Protein FdhE.